The primary structure comprises 223 residues: Thymidine kinase (223 aa).

ATP contacts are provided by residues 19–26 (GPMFAGKT) and 96–99 (DEVQ). Glu97 acts as the Proton acceptor in catalysis. Zn(2+) is bound by residues Cys153, Cys156, Cys191, and His194.

This sequence belongs to the thymidine kinase family. Homotetramer.

The protein localises to the cytoplasm. It carries out the reaction thymidine + ATP = dTMP + ADP + H(+). The polypeptide is Thymidine kinase (Ureaplasma parvum serovar 3 (strain ATCC 27815 / 27 / NCTC 11736)).